Reading from the N-terminus, the 300-residue chain is MNDRLAARLEAEVRGEILRDEPMARHTSLRVGGPADFFVTPADPDDMRALLAILAETGTPWLAVGGGYNLLIRDGGFRGVVISSARMTSLERLEGNRAVVGAGVANGRLTAFLRNEGLAGLEFLCGIPGTVGGALAMNAGAHGGAILDRVEEILTIGTAGFECKGRELLDYGYRYLKLQPGEIIIGATFVLDSDDPRRISERIDGCRAHRTASQQVGFPNAGSFFKNPPGQAAWRLIEDAGLRGARVGGAQVSEVHTNFLVNRGGATAADFLALAARIKDAVKLKSGTALEEEVKIFGDE.

One can recognise an FAD-binding PCMH-type domain in the interval 30 to 194 (RVGGPADFFV…IGATFVLDSD (165 aa)). Residue Arg-174 is part of the active site. Ser-223 functions as the Proton donor in the catalytic mechanism. Residue Glu-293 is part of the active site.

The protein belongs to the MurB family. The cofactor is FAD.

It is found in the cytoplasm. The enzyme catalyses UDP-N-acetyl-alpha-D-muramate + NADP(+) = UDP-N-acetyl-3-O-(1-carboxyvinyl)-alpha-D-glucosamine + NADPH + H(+). It participates in cell wall biogenesis; peptidoglycan biosynthesis. In terms of biological role, cell wall formation. In Geobacter sulfurreducens (strain ATCC 51573 / DSM 12127 / PCA), this protein is UDP-N-acetylenolpyruvoylglucosamine reductase.